The following is a 297-amino-acid chain: DNA processing protein DprA (297 aa).

This sequence belongs to the DprA/Smf family. In terms of assembly, interacts with RecA. Interacts with ComFA and ComFC.

Its subcellular location is the cytoplasm. In terms of biological role, protein that helps load RecA onto ssDNA during transformation. Binds cooperatively to circular ssDNA, is able to bridge different segments of DNA. Favors the loading of RecA onto SsbA- or SsbB-coated ssDNA and formation of RecA-DNA filaments. RecA-ATP cannot catalyze homologous DNA strand exchange; SsbA and DprA activate strand exchange by RecA-ATP. The protein is DNA processing protein DprA of Bacillus subtilis (strain 168).